We begin with the raw amino-acid sequence, 106 residues long: MAWFLLVIAGIEEIIAAIAMKYIDGTRKKWPIIVMTVGFGLSFYCLSQAMIVLPAGVAYAVWTGIGSIGVSAVGLIWFKERFQLSQVISLCLILAGVIGLRLTSSS.

The next 4 helical transmembrane spans lie at 3-23, 29-49, 50-70, and 82-102; these read WFLLVIAGIEEIIAAIAMKYI, KWPIIVMTVGFGLSFYCLSQA, MIVLPAGVAYAVWTGIGSIGV, and FQLSQVISLCLILAGVIGLRL.

Belongs to the drug/metabolite transporter (DMT) superfamily. Small multidrug resistance (SMR) (TC 2.A.7.1) family.

It is found in the cell membrane. This is an uncharacterized protein from Bacillus subtilis (strain 168).